A 962-amino-acid chain; its full sequence is Protocadherin gamma-A4 (962 aa).

A disordered region spans residues methionine 1–arginine 24. Positions methionine 1–alanine 59 are cleaved as a signal peptide. Cadherin domains follow at residues glutamate 60–phenylalanine 164, glycine 165–phenylalanine 273, threonine 274–valine 378, threonine 379–phenylalanine 483, proline 484–phenylalanine 598, and aspartate 601–alanine 713. At glutamate 60–tyrosine 723 the chain is on the extracellular side. N-linked (GlcNAc...) asparagine glycans are attached at residues asparagine 450 and asparagine 576. Residues leucine 724 to alanine 744 form a helical membrane-spanning segment. Residues leucine 745–lysine 962 are Cytoplasmic-facing. Disordered regions lie at residues lysine 832–asparagine 871 and alanine 932–lysine 962. Residues asparagine 836–asparagine 871 show a composition bias toward polar residues. Residues asparagine 952–lysine 962 are compositionally biased toward basic residues.

It is found in the cell membrane. Functionally, potential calcium-dependent cell-adhesion protein. May be involved in the establishment and maintenance of specific neuronal connections in the brain. This is Protocadherin gamma-A4 (PCDHGA4) from Homo sapiens (Human).